The sequence spans 76 residues: Small ribosomal subunit protein bS18 (76 aa).

It belongs to the bacterial ribosomal protein bS18 family. In terms of assembly, part of the 30S ribosomal subunit. Forms a tight heterodimer with protein bS6.

Functionally, binds as a heterodimer with protein bS6 to the central domain of the 16S rRNA, where it helps stabilize the platform of the 30S subunit. This chain is Small ribosomal subunit protein bS18, found in Neisseria gonorrhoeae (strain ATCC 700825 / FA 1090).